The sequence spans 449 residues: Tubulin alpha chain (449 aa).

The GTP site is built by Gln-11, Glu-71, Ser-140, Gly-144, Thr-145, Thr-179, Asn-206, and Asn-228. Glu-71 serves as a coordination point for Mg(2+). Glu-254 is a catalytic residue.

Belongs to the tubulin family. In terms of assembly, dimer of alpha and beta chains. A typical microtubule is a hollow water-filled tube with an outer diameter of 25 nm and an inner diameter of 15 nM. Alpha-beta heterodimers associate head-to-tail to form protofilaments running lengthwise along the microtubule wall with the beta-tubulin subunit facing the microtubule plus end conferring a structural polarity. Microtubules usually have 13 protofilaments but different protofilament numbers can be found in some organisms and specialized cells. Mg(2+) serves as cofactor.

The protein resides in the cytoplasm. Its subcellular location is the cytoskeleton. The enzyme catalyses GTP + H2O = GDP + phosphate + H(+). Its function is as follows. Tubulin is the major constituent of microtubules, a cylinder consisting of laterally associated linear protofilaments composed of alpha- and beta-tubulin heterodimers. Microtubules grow by the addition of GTP-tubulin dimers to the microtubule end, where a stabilizing cap forms. Below the cap, tubulin dimers are in GDP-bound state, owing to GTPase activity of alpha-tubulin. This is Tubulin alpha chain (TUB1) from Pneumocystis carinii.